Here is a 415-residue protein sequence, read N- to C-terminus: Serine hydroxymethyltransferase (415 aa).

Residues L121 and 125 to 127 contribute to the (6S)-5,6,7,8-tetrahydrofolate site; that span reads GHL. N6-(pyridoxal phosphate)lysine is present on K230. Residues E246 and 354 to 356 contribute to the (6S)-5,6,7,8-tetrahydrofolate site; that span reads SPF.

It belongs to the SHMT family. In terms of assembly, homodimer. Pyridoxal 5'-phosphate serves as cofactor.

Its subcellular location is the cytoplasm. The catalysed reaction is (6R)-5,10-methylene-5,6,7,8-tetrahydrofolate + glycine + H2O = (6S)-5,6,7,8-tetrahydrofolate + L-serine. The protein operates within one-carbon metabolism; tetrahydrofolate interconversion. It participates in amino-acid biosynthesis; glycine biosynthesis; glycine from L-serine: step 1/1. Catalyzes the reversible interconversion of serine and glycine with tetrahydrofolate (THF) serving as the one-carbon carrier. This reaction serves as the major source of one-carbon groups required for the biosynthesis of purines, thymidylate, methionine, and other important biomolecules. Also exhibits THF-independent aldolase activity toward beta-hydroxyamino acids, producing glycine and aldehydes, via a retro-aldol mechanism. This chain is Serine hydroxymethyltransferase, found in Bdellovibrio bacteriovorus (strain ATCC 15356 / DSM 50701 / NCIMB 9529 / HD100).